Consider the following 150-residue polypeptide: Large ribosomal subunit protein bL9 (150 aa).

Belongs to the bacterial ribosomal protein bL9 family.

Functionally, binds to the 23S rRNA. This chain is Large ribosomal subunit protein bL9, found in Burkholderia ambifaria (strain MC40-6).